We begin with the raw amino-acid sequence, 633 residues long: NADPH-dependent diflavin oxidoreductase 1 (633 aa).

A Flavodoxin-like domain is found at 5–149 (CTIIYATESG…EVEKWSQELI (145 aa)). Residues 11 to 16 (TESGTS), 58 to 61 (STTG), and D131 each bind FMN. Residues 196–442 (TQFYKSKLKV…FIKESGARLP (247 aa)) form the FAD-binding FR-type domain. Residues 377-380 (RPFS) and 412-415 (GLCS) contribute to the FAD site. NADP(+) contacts are provided by residues T456, 520–521 (SR), 528–532 (KVYVQ), and D565. Residues 580-610 (KNNNNNNNNNNNNNNNNNNNNNNNNNDDENN) are disordered. Over residues 581-604 (NNNNNNNNNNNNNNNNNNNNNNNN) the composition is skewed to low complexity. W633 contributes to the FAD binding site.

It belongs to the NADPH-dependent diflavin oxidoreductase NDOR1 family. The protein in the N-terminal section; belongs to the flavodoxin family. In the C-terminal section; belongs to the flavoprotein pyridine nucleotide cytochrome reductase family. It depends on FAD as a cofactor. The cofactor is FMN.

The protein resides in the cytoplasm. The enzyme catalyses 2 oxidized [2Fe-2S]-[protein] + NADPH = 2 reduced [2Fe-2S]-[protein] + NADP(+) + H(+). In terms of biological role, NADPH-dependent reductase which is a central component of the cytosolic iron-sulfur (Fe-S) protein assembly (CIA) machinery. Transfers electrons from NADPH via its FAD and FMN prosthetic groups to the [2Fe-2S] cluster of the anamorsin/DRE2 homolog, another key component of the CIA machinery. In turn, this reduced cluster provides electrons for assembly of cytosolic iron-sulfur cluster proteins. The sequence is that of NADPH-dependent diflavin oxidoreductase 1 (redC) from Dictyostelium discoideum (Social amoeba).